Consider the following 321-residue polypeptide: Beta-ketoacyl-[acyl-carrier-protein] synthase III (321 aa).

Residues Cys-115 and His-248 contribute to the active site. The tract at residues 249 to 253 (QANIR) is ACP-binding. Residue Asn-278 is part of the active site.

It belongs to the thiolase-like superfamily. FabH family. Homodimer.

The protein resides in the cytoplasm. The catalysed reaction is malonyl-[ACP] + acetyl-CoA + H(+) = 3-oxobutanoyl-[ACP] + CO2 + CoA. Its pathway is lipid metabolism; fatty acid biosynthesis. In terms of biological role, catalyzes the condensation reaction of fatty acid synthesis by the addition to an acyl acceptor of two carbons from malonyl-ACP. Catalyzes the first condensation reaction which initiates fatty acid synthesis and may therefore play a role in governing the total rate of fatty acid production. Possesses both acetoacetyl-ACP synthase and acetyl transacylase activities. Its substrate specificity determines the biosynthesis of branched-chain and/or straight-chain of fatty acids. The sequence is that of Beta-ketoacyl-[acyl-carrier-protein] synthase III from Aromatoleum aromaticum (strain DSM 19018 / LMG 30748 / EbN1) (Azoarcus sp. (strain EbN1)).